The following is a 62-amino-acid chain: Small ribosomal subunit protein eS17 (62 aa).

It belongs to the eukaryotic ribosomal protein eS17 family.

This is Small ribosomal subunit protein eS17 from Methanoculleus marisnigri (strain ATCC 35101 / DSM 1498 / JR1).